A 493-amino-acid chain; its full sequence is Geraniol 8-hydroxylase (493 aa).

The Lumenal portion of the chain corresponds to 1-6; sequence MDYLTI. The chain crosses the membrane as a helical span at residues 7 to 23; sequence ILTLLFALTLYEAFSYL. Topologically, residues 24-493 are cytoplasmic; that stretch reads SRRTKNLPPG…HPLRAVPSTL (470 aa). Cysteine 436 is a binding site for heme.

The protein belongs to the cytochrome P450 family. Heme is required as a cofactor. As to expression, expressed in roots, stems, leaves and flower buds. Hardly detected in mature flowers and fruits. Expressed in the internal phloem-associated parenchyma.

It is found in the endoplasmic reticulum membrane. It catalyses the reaction (2E)-geraniol + reduced [NADPH--hemoprotein reductase] + O2 = (6E)-8-hydroxygeraniol + oxidized [NADPH--hemoprotein reductase] + H2O + H(+). Functionally, hydroxylase involved in the biosynthesis of hydroxygeraniol, a precursor of the terpenoid indole alkaloids such as vinblastine and vincristine. Also able to hydroxylate in vitro nerol and to catalyze 3'-hydroxylation of the flavanone naringenin to form eriodictyol. No activity with apigenin, kaempferol, p-coumaric acid and ferulic acid as substrates. This Catharanthus roseus (Madagascar periwinkle) protein is Geraniol 8-hydroxylase (CYP76B6).